We begin with the raw amino-acid sequence, 1202 residues long: Putative late blight resistance protein homolog R1B-8 (1202 aa).

2 coiled-coil regions span residues 345–368 (RYSD…ESLQ) and 437–459 (LRMN…RLLN). The region spanning 426–741 (IARTSSQLAR…ISESFIKSCE (316 aa)) is the NB-ARC domain. 471 to 478 (GMPGLGKT) contacts ATP. LRR repeat units follow at residues 865–889 (FKFL…LFYL), 908–936 (LWNL…VWDM), 1011–1036 (PIRL…ISAP), 1040–1059 (YLKL…TADH), 1060–1084 (LKHL…VSNG), 1086–1111 (FPQL…VFPN), and 1128–1151 (SCFM…VVQS).

It belongs to the disease resistance NB-LRR family.

Its subcellular location is the cytoplasm. The protein resides in the membrane. Its function is as follows. Confers resistance to late blight (Phytophthora infestans) races carrying the avirulence gene Avr1. Resistance proteins guard the plant against pathogens that contain an appropriate avirulence protein via an indirect interaction with this avirulence protein. That triggers a defense system including the hypersensitive response, which restricts the pathogen growth. The chain is Putative late blight resistance protein homolog R1B-8 (R1B-8) from Solanum demissum (Wild potato).